Consider the following 272-residue polypeptide: Alkaline ceramidase (272 aa).

A run of 2 helical transmembrane segments spans residues 34 to 54 (FANTCTNLPIIVLPLVNIMLL) and 61 to 81 (VNGGLIFPQLLLTFNGLASTY). H83 lines the Zn(2+) pocket. Helical transmembrane passes span 96-116 (LSLVWIITVFLVVYIPVMKWF), 124-144 (LTLVRWVVLIVTALVSGLCFL), 148-168 (LNAIALMLFSIPAAVVINYEG), and 183-203 (ILALWGVAFSFWFADRLLCDF). 2 residues coordinate Zn(2+): H213 and H217. The helical transmembrane segment at 214-234 (ALFHLLAGLAGYTIFIMFSMI) threads the bilayer. The N-linked (GlcNAc...) asparagine glycan is linked to N256.

The protein belongs to the alkaline ceramidase family. The cofactor is Zn(2+).

The protein resides in the membrane. It carries out the reaction an N-acyl-sphingoid base + H2O = a sphingoid base + a fatty acid. The enzyme catalyses an N-acylsphing-4-enine + H2O = sphing-4-enine + a fatty acid. The catalysed reaction is an N-acyl-15-methylhexadecasphing-4-enine + H2O = 15-methylhexadecasphing-4-enine + a fatty acid. Its pathway is lipid metabolism; sphingolipid metabolism. Functionally, hydrolyzes the sphingolipid ceramide into sphingoid base and free fatty acid. C.elegans contain specific sphingoid bases, which are unique or different in structure compared to the sphingoid bases found in other animals. Two examples of these distinctive compounds are: 15-methylhexadecasphinganine and 15-methylhexadecasphing-4-enine. This is Alkaline ceramidase from Caenorhabditis elegans.